Reading from the N-terminus, the 382-residue chain is tRNA-specific 2-thiouridylase MnmA (382 aa).

Residues 18 to 25 (AMSGGVDS) and Leu44 each bind ATP. The active-site Nucleophile is the Cys112. Residues Cys112 and Cys209 are joined by a disulfide bond. Gly136 provides a ligand contact to ATP. Residues 159–161 (RDQ) are interaction with tRNA. Catalysis depends on Cys209, which acts as the Cysteine persulfide intermediate.

This sequence belongs to the MnmA/TRMU family.

Its subcellular location is the cytoplasm. It catalyses the reaction S-sulfanyl-L-cysteinyl-[protein] + uridine(34) in tRNA + AH2 + ATP = 2-thiouridine(34) in tRNA + L-cysteinyl-[protein] + A + AMP + diphosphate + H(+). Catalyzes the 2-thiolation of uridine at the wobble position (U34) of tRNA, leading to the formation of s(2)U34. In Methylobacterium sp. (strain 4-46), this protein is tRNA-specific 2-thiouridylase MnmA.